The following is a 629-amino-acid chain: tRNA uridine 5-carboxymethylaminomethyl modification enzyme MnmG (629 aa).

13-18 (GGGHAG) serves as a coordination point for FAD. An NAD(+)-binding site is contributed by 273-287 (GPRYCPSIEDKIHRF).

It belongs to the MnmG family. Homodimer. Heterotetramer of two MnmE and two MnmG subunits. Requires FAD as cofactor.

The protein localises to the cytoplasm. NAD-binding protein involved in the addition of a carboxymethylaminomethyl (cmnm) group at the wobble position (U34) of certain tRNAs, forming tRNA-cmnm(5)s(2)U34. The sequence is that of tRNA uridine 5-carboxymethylaminomethyl modification enzyme MnmG from Shewanella baltica (strain OS155 / ATCC BAA-1091).